Consider the following 399-residue polypeptide: S-adenosylmethionine synthase (399 aa).

Histidine 16 lines the ATP pocket. Aspartate 18 lines the Mg(2+) pocket. Glutamate 44 provides a ligand contact to K(+). The L-methionine site is built by glutamate 57 and glutamine 100. Positions 100-110 are flexible loop; the sequence is QSSDIAQGVNE. ATP-binding positions include 177–179, 244–245, aspartate 253, 259–260, alanine 276, and lysine 280; these read DAK, RF, and RK. Aspartate 253 serves as a coordination point for L-methionine. Lysine 284 contributes to the L-methionine binding site.

The protein belongs to the AdoMet synthase family. Homotetramer; dimer of dimers. Mg(2+) serves as cofactor. Requires K(+) as cofactor.

It is found in the cytoplasm. It carries out the reaction L-methionine + ATP + H2O = S-adenosyl-L-methionine + phosphate + diphosphate. Its pathway is amino-acid biosynthesis; S-adenosyl-L-methionine biosynthesis; S-adenosyl-L-methionine from L-methionine: step 1/1. Its function is as follows. Catalyzes the formation of S-adenosylmethionine (AdoMet) from methionine and ATP. The overall synthetic reaction is composed of two sequential steps, AdoMet formation and the subsequent tripolyphosphate hydrolysis which occurs prior to release of AdoMet from the enzyme. This Lactococcus lactis subsp. lactis (strain IL1403) (Streptococcus lactis) protein is S-adenosylmethionine synthase.